Reading from the N-terminus, the 320-residue chain is 1-aminocyclopropane-1-carboxylate oxidase (320 aa).

The Fe2OG dioxygenase domain maps to 156 to 256; it reads PTFGTKVSNY…RMSIASFYNP (101 aa). Fe cation is bound by residues histidine 180, aspartate 182, and histidine 237.

This sequence belongs to the iron/ascorbate-dependent oxidoreductase family. Fe cation is required as a cofactor.

It carries out the reaction 1-aminocyclopropane-1-carboxylate + L-ascorbate + O2 = ethene + L-dehydroascorbate + hydrogen cyanide + CO2 + 2 H2O. It participates in alkene biosynthesis; ethylene biosynthesis via S-adenosyl-L-methionine; ethylene from S-adenosyl-L-methionine: step 2/2. This Brassica juncea (Indian mustard) protein is 1-aminocyclopropane-1-carboxylate oxidase (ACO).